Consider the following 546-residue polypeptide: UDP-glycosyltransferase FPY2 (546 aa).

The signal sequence occupies residues 1–20; that stretch reads MSLPKAQILVVVTVGGSTNS. The helical transmembrane segment at 517–537 threads the bilayer; that stretch reads LNNIDVALLFFILLGIISWIT.

It belongs to the glycosyltransferase 28 family.

The protein resides in the membrane. The protein operates within secondary metabolite biosynthesis. Its function is as follows. UDP-glycosyltransferase; part of the gene cluster that mediates the biosynthesis of the gamma-pyrones fusapyrone (FPY) and deoxyfusapyrone (dFPY). FPY is an undecaketide and thus likely synthesized by the polyketide synthase FPY1 from acetyl-CoA functioning as starter unit and the addition of 10 malonyl-CoA extender units by successive Claisen-condensations. Next to this, FPY shares some rare features: C-glycosylated 4-deoxyglucose at C-3, a gem-dimethyl group at C-13, and an alpha-beta to beta-gamma double bond shift at C-20. During FPY biosynthesis mono-C-methyl groups are transferred to the tetra-, penta-, hexa- and heptaketide, while two C-methyl groups are transferred to the nonaketide, suggesting that the CMet domain is programmed to selectively catalyze two successive C-alpha-methylation reactions of the nonaketide, while other alpha-carbons are non- or mono-methylated only. While the origin of the 4'-deoxyglucose moiety remains opaque, its transfer to C-3 is most likely mediated by the C-glycosyltransferase FPY2. Next to this, the hydroxyl group present at C-33 and discriminating between FPY and dFPY, is likely to be installed by the cytochrome P450 monooxygenase FPY7. No putative function can be predicted for the remaining genes FPY3-FPY6. This is UDP-glycosyltransferase FPY2 from Fusarium mangiferae (Mango malformation disease fungus).